The following is a 251-amino-acid chain: Triosephosphate isomerase (251 aa).

Substrate contacts are provided by Asn-12 and Lys-14. His-96 acts as the Electrophile in catalysis. Catalysis depends on Glu-168, which acts as the Proton acceptor.

This sequence belongs to the triosephosphate isomerase family. As to quaternary structure, homodimer.

It is found in the cytoplasm. The protein localises to the glycosome. The enzyme catalyses D-glyceraldehyde 3-phosphate = dihydroxyacetone phosphate. The protein operates within carbohydrate biosynthesis; gluconeogenesis. It functions in the pathway carbohydrate degradation; glycolysis; D-glyceraldehyde 3-phosphate from glycerone phosphate: step 1/1. The sequence is that of Triosephosphate isomerase from Leishmania mexicana.